Reading from the N-terminus, the 381-residue chain is Probable tRNA sulfurtransferase (381 aa).

The THUMP domain occupies 55–163; it reads GECLENLNKV…DDEAFIYHEK (109 aa). ATP is bound by residues 181-182, Lys-265, Gly-287, and Gln-296; that span reads LV.

It belongs to the ThiI family.

The protein resides in the cytoplasm. It carries out the reaction [ThiI sulfur-carrier protein]-S-sulfanyl-L-cysteine + a uridine in tRNA + 2 reduced [2Fe-2S]-[ferredoxin] + ATP + H(+) = [ThiI sulfur-carrier protein]-L-cysteine + a 4-thiouridine in tRNA + 2 oxidized [2Fe-2S]-[ferredoxin] + AMP + diphosphate. The enzyme catalyses [ThiS sulfur-carrier protein]-C-terminal Gly-Gly-AMP + S-sulfanyl-L-cysteinyl-[cysteine desulfurase] + AH2 = [ThiS sulfur-carrier protein]-C-terminal-Gly-aminoethanethioate + L-cysteinyl-[cysteine desulfurase] + A + AMP + 2 H(+). It functions in the pathway cofactor biosynthesis; thiamine diphosphate biosynthesis. Its function is as follows. Catalyzes the ATP-dependent transfer of a sulfur to tRNA to produce 4-thiouridine in position 8 of tRNAs, which functions as a near-UV photosensor. Also catalyzes the transfer of sulfur to the sulfur carrier protein ThiS, forming ThiS-thiocarboxylate. This is a step in the synthesis of thiazole, in the thiamine biosynthesis pathway. The sulfur is donated as persulfide by IscS. The sequence is that of Probable tRNA sulfurtransferase from Methanobrevibacter smithii (strain ATCC 35061 / DSM 861 / OCM 144 / PS).